A 281-amino-acid polypeptide reads, in one-letter code: Undecaprenyl-diphosphatase (281 aa).

A run of 8 helical transmembrane segments spans residues 5–25, 48–68, 92–112, 118–138, 154–174, 192–212, 226–246, and 261–281; these read LFVL…FLPI, VKMY…LLYW, FWFM…LLDA, LMTP…MIYA, VTPK…IPGM, VVAA…YSLL, AELI…VAVI, and FAIY…MGFF.

The protein belongs to the UppP family.

It is found in the cell membrane. The enzyme catalyses di-trans,octa-cis-undecaprenyl diphosphate + H2O = di-trans,octa-cis-undecaprenyl phosphate + phosphate + H(+). Its function is as follows. Catalyzes the dephosphorylation of undecaprenyl diphosphate (UPP). Confers resistance to bacitracin. The chain is Undecaprenyl-diphosphatase from Ruminiclostridium cellulolyticum (strain ATCC 35319 / DSM 5812 / JCM 6584 / H10) (Clostridium cellulolyticum).